The sequence spans 719 residues: DNA ligase (719 aa).

NAD(+) contacts are provided by residues 42 to 46 (DAAYD), 92 to 93 (SL), and Glu126. Lys128 functions as the N6-AMP-lysine intermediate in the catalytic mechanism. 4 residues coordinate NAD(+): Arg149, Glu185, Lys301, and Lys325. Zn(2+)-binding residues include Cys430, Cys433, Cys448, and Cys454. Residues 640 to 719 (ATGSPVEGKT…DDWFKLVGED (80 aa)) enclose the BRCT domain.

The protein belongs to the NAD-dependent DNA ligase family. LigA subfamily. It depends on Mg(2+) as a cofactor. The cofactor is Mn(2+).

It carries out the reaction NAD(+) + (deoxyribonucleotide)n-3'-hydroxyl + 5'-phospho-(deoxyribonucleotide)m = (deoxyribonucleotide)n+m + AMP + beta-nicotinamide D-nucleotide.. DNA ligase that catalyzes the formation of phosphodiester linkages between 5'-phosphoryl and 3'-hydroxyl groups in double-stranded DNA using NAD as a coenzyme and as the energy source for the reaction. It is essential for DNA replication and repair of damaged DNA. The protein is DNA ligase of Brucella ovis (strain ATCC 25840 / 63/290 / NCTC 10512).